The primary structure comprises 712 residues: Cyclolysin secretion/processing ATP-binding protein CyaB (712 aa).

In terms of domain architecture, Peptidase C39 spans 7 to 128 (QCASVPDSGL…ALWAGELLLC (122 aa)). Positions 157–439 (IGEVLLISLV…LAQLWNDFQQ (283 aa)) constitute an ABC transmembrane type-1 domain. 6 consecutive transmembrane segments (helical) span residues 160 to 180 (VLLISLVLQFIALLTPLFFQV), 194 to 214 (LNVIAVGFLAAILFEALLTGI), 272 to 292 (AVTVLLDVVFSVVFIAVMFFY), 298 to 318 (LVVLAALPCYFLLSLVLTPVL), 367 to 387 (VAAGLSVANVAMLANTGVTLI), and 390 to 410 (LVALGVLWVGATEVVAQRMTV). Residues 471-706 (IELDRVSFRY…GGLYARLQAL (236 aa)) form the ABC transporter domain. Residue 505-512 (GRSGSGKS) coordinates ATP.

It belongs to the ABC transporter superfamily. Cyclolysin exporter (TC 3.A.1.109.2) family.

The protein resides in the cell membrane. Functionally, involved in the export of calmodulin-sensitive adenylate cyclase-hemolysin (cyclolysin). This is Cyclolysin secretion/processing ATP-binding protein CyaB (cyaB) from Bordetella pertussis (strain Tohama I / ATCC BAA-589 / NCTC 13251).